The following is a 203-amino-acid chain: MDRVVIVLSVLSVAASSQSILDQRRFSIAVSRVQHIHLLAQKYFSDFESSLQTEDQRQVNKIFLQDFCNSDDIISPIDKHDTQRSSVLKLLSISVRLIESWEFSSRFVTWSTFPRNQISHKLSELKTGIRMLIEANQDGAEVFSDSSTFQLAPYGNFYQSLGGDESLRRNYELLACFKKDMHKVETYLTVAKCRLSPEANCTL.

The first 17 residues, 1–17 (MDRVVIVLSVLSVAASS), serve as a signal peptide directing secretion. The residue at position 18 (glutamine 18) is a Pyrrolidone carboxylic acid. Histidine 35 is a Zn(2+) binding site. Cysteine 68 and cysteine 176 are oxidised to a cystine. Glutamate 185 serves as a coordination point for Zn(2+). A disulfide bridge links cysteine 193 with cysteine 201.

Belongs to the somatotropin/prolactin family.

It localises to the secreted. In terms of biological role, growth hormone plays an important role in growth control and is involved in the regulation of several anabolic processes. Implicated as an osmoregulatory substance important for seawater adaptation. The polypeptide is Somatotropin (gh) (Solea senegalensis (Senegalese sole)).